We begin with the raw amino-acid sequence, 427 residues long: Homoserine O-acetyltransferase FUB5 (427 aa).

Over residues 1-13 the composition is skewed to low complexity; the sequence is MTTTTTAPALPTP. Residues 1 to 35 form a disordered region; sequence MTTTTTAPALPTPIHDGLGNGTTYERSIPRPVNPF. The AB hydrolase-1 domain occupies 77-400; that stretch reads NVMIICHALS…VSDDGHDAFL (324 aa). The active-site Nucleophile is the S175. A disordered region spans residues 260–297; that stretch reads RFGRDTGNKKKAKNKGSETLPSNSTPIHSQGGADETPV. Residues 276–287 show a composition bias toward polar residues; that stretch reads SETLPSNSTPIH. Residues D367 and H396 contribute to the active site.

This sequence belongs to the AB hydrolase superfamily. MetX family.

The enzyme catalyses L-homoserine + acetyl-CoA = O-acetyl-L-homoserine + CoA. Its pathway is mycotoxin biosynthesis. Functionally, homoserine O-acetyltransferase; part of the gene cluster that mediates the biosynthesis of fusaric acid, a mycotoxin with low to moderate toxicity to animals and humans, but with high phytotoxic properties. L-aspartate is suggested as fusaric acid amino acid precursor that is activated and further processed to O-acetyl-L-homoserine by cluster enzymes aspartate kinase FUB3 and homoserine O-acetyltransferase FUB5, as well as enzymes of the primary metabolism. The polyketide synthase (PKS) FUB1 generates the triketide trans-2-hexenal which is presumptively released by the hydrolase FUB4 and linked to the NRPS-bound amino acid precursor by NAD(P)-dependent dehydrogenase FUB6. FUB1, FUB4, and the non-canonical NRPS Fub8 may form an enzyme complex. Further processing of the NRPS-bound intermediate might be carried out by FUB6 and the sulfhydrylase FUB7, enabling a spontaneous electrocyclization to close the carbon backbone of fusaric acid. Dihydrofusaric acid is likely to be released via reduction by the thioester reductase (TR) domain of FUB8 whereupon the final oxidation to fusaric acid may (also) be performed by the FMN-dependent dehydrogenase FUB9. This is Homoserine O-acetyltransferase FUB5 from Gibberella fujikuroi (strain CBS 195.34 / IMI 58289 / NRRL A-6831) (Bakanae and foot rot disease fungus).